The primary structure comprises 213 residues: UPF0502 protein Daro_2469 (213 aa).

The protein belongs to the UPF0502 family.

The chain is UPF0502 protein Daro_2469 from Dechloromonas aromatica (strain RCB).